We begin with the raw amino-acid sequence, 132 residues long: MERREDVIVGKHVYGSLYGVPREKATDEEYLRGVVVRAAESAGATVHAVNSWTIPGEKGGVSVIVLVLESHLALHTWPEYDYATFDIYTCGEHTDPWKAFELLLSELKPRKYTVHYVDRSQEKTVLEAQPRR.

The Schiff-base intermediate with substrate; via pyruvic acid role is filled by Ser70. A Pyruvic acid (Ser); by autocatalysis modification is found at Ser70. His75 functions as the Proton acceptor; for processing activity in the catalytic mechanism. The active-site Proton donor; for catalytic activity is Cys90.

The protein belongs to the prokaryotic AdoMetDC family. Type 1 subfamily. As to quaternary structure, heterooctamer of four alpha and four beta chains arranged as a tetramer of alpha/beta heterodimers. Pyruvate is required as a cofactor. Post-translationally, is synthesized initially as an inactive proenzyme. Formation of the active enzyme involves a self-maturation process in which the active site pyruvoyl group is generated from an internal serine residue via an autocatalytic post-translational modification. Two non-identical subunits are generated from the proenzyme in this reaction, and the pyruvate is formed at the N-terminus of the alpha chain, which is derived from the carboxyl end of the proenzyme. The post-translation cleavage follows an unusual pathway, termed non-hydrolytic serinolysis, in which the side chain hydroxyl group of the serine supplies its oxygen atom to form the C-terminus of the beta chain, while the remainder of the serine residue undergoes an oxidative deamination to produce ammonia and the pyruvoyl group blocking the N-terminus of the alpha chain.

It carries out the reaction L-arginine + H(+) = agmatine + CO2. The protein operates within amine and polyamine biosynthesis; agmatine biosynthesis; agmatine from L-arginine: step 1/1. Specifically catalyzes the decarboxylation of L-arginine to agmatine. Has no S-adenosylmethionine decarboxylase (AdoMetDC) activity. The sequence is that of Arginine decarboxylase proenzyme from Aeropyrum pernix (strain ATCC 700893 / DSM 11879 / JCM 9820 / NBRC 100138 / K1).